Here is a 142-residue protein sequence, read N- to C-terminus: Nucleoside diphosphate kinase (142 aa).

Residues lysine 11, phenylalanine 59, arginine 87, threonine 93, arginine 104, and asparagine 114 each contribute to the ATP site. Histidine 117 functions as the Pros-phosphohistidine intermediate in the catalytic mechanism.

It belongs to the NDK family. As to quaternary structure, homotetramer. It depends on Mg(2+) as a cofactor.

It localises to the cytoplasm. The catalysed reaction is a 2'-deoxyribonucleoside 5'-diphosphate + ATP = a 2'-deoxyribonucleoside 5'-triphosphate + ADP. It carries out the reaction a ribonucleoside 5'-diphosphate + ATP = a ribonucleoside 5'-triphosphate + ADP. Functionally, major role in the synthesis of nucleoside triphosphates other than ATP. The ATP gamma phosphate is transferred to the NDP beta phosphate via a ping-pong mechanism, using a phosphorylated active-site intermediate. This is Nucleoside diphosphate kinase from Pectobacterium atrosepticum (strain SCRI 1043 / ATCC BAA-672) (Erwinia carotovora subsp. atroseptica).